The chain runs to 215 residues: 3-demethoxyubiquinol 3-hydroxylase (215 aa).

6 residues coordinate Fe cation: E64, E94, H97, E146, E178, and H181.

Belongs to the COQ7 family. Fe cation is required as a cofactor.

The protein resides in the cell membrane. The catalysed reaction is a 5-methoxy-2-methyl-3-(all-trans-polyprenyl)benzene-1,4-diol + AH2 + O2 = a 3-demethylubiquinol + A + H2O. Its pathway is cofactor biosynthesis; ubiquinone biosynthesis. In terms of biological role, catalyzes the hydroxylation of 2-nonaprenyl-3-methyl-6-methoxy-1,4-benzoquinol during ubiquinone biosynthesis. The protein is 3-demethoxyubiquinol 3-hydroxylase of Pseudomonas fluorescens (strain ATCC BAA-477 / NRRL B-23932 / Pf-5).